Reading from the N-terminus, the 432-residue chain is Adenylosuccinate synthetase (432 aa).

GTP is bound by residues 13–19 (GDEGKGK) and 41–43 (GHT). Residue Asp14 is the Proton acceptor of the active site. The Mg(2+) site is built by Asp14 and Gly41. IMP is bound by residues 14-17 (DEGK), 39-42 (NAGH), Thr130, Arg144, Gln225, Thr240, and Arg304. The active-site Proton donor is His42. 300-306 (ATTGRRR) contacts substrate. Residues Arg306, 332–334 (KLD), and 415–417 (STG) contribute to the GTP site.

The protein belongs to the adenylosuccinate synthetase family. As to quaternary structure, homodimer. It depends on Mg(2+) as a cofactor.

It localises to the cytoplasm. The enzyme catalyses IMP + L-aspartate + GTP = N(6)-(1,2-dicarboxyethyl)-AMP + GDP + phosphate + 2 H(+). It functions in the pathway purine metabolism; AMP biosynthesis via de novo pathway; AMP from IMP: step 1/2. Its function is as follows. Plays an important role in the de novo pathway of purine nucleotide biosynthesis. Catalyzes the first committed step in the biosynthesis of AMP from IMP. In Erwinia tasmaniensis (strain DSM 17950 / CFBP 7177 / CIP 109463 / NCPPB 4357 / Et1/99), this protein is Adenylosuccinate synthetase.